Consider the following 254-residue polypeptide: 5-oxoprolinase subunit A 1 (254 aa).

Belongs to the LamB/PxpA family. Forms a complex composed of PxpA, PxpB and PxpC.

The catalysed reaction is 5-oxo-L-proline + ATP + 2 H2O = L-glutamate + ADP + phosphate + H(+). Its function is as follows. Catalyzes the cleavage of 5-oxoproline to form L-glutamate coupled to the hydrolysis of ATP to ADP and inorganic phosphate. The protein is 5-oxoprolinase subunit A 1 of Burkholderia pseudomallei (strain K96243).